We begin with the raw amino-acid sequence, 214 residues long: Putative glucose-6-phosphate isomerase 1 (214 aa).

Fe cation contacts are provided by His92, His94, Glu101, and His140.

This sequence belongs to the archaeal-type GPI family. In terms of assembly, homodimer. Fe cation serves as cofactor.

It is found in the cytoplasm. It catalyses the reaction alpha-D-glucose 6-phosphate = beta-D-fructose 6-phosphate. Its pathway is carbohydrate degradation; glycolysis; D-glyceraldehyde 3-phosphate and glycerone phosphate from D-glucose: step 2/4. The polypeptide is Putative glucose-6-phosphate isomerase 1 (pgiA1) (Rhizobium meliloti (strain 1021) (Ensifer meliloti)).